Consider the following 475-residue polypeptide: Sulfate adenylyltransferase subunit 1 (475 aa).

In terms of domain architecture, tr-type G spans Lys25–Arg239. The G1 stretch occupies residues Gly34 to Ser41. Gly34–Ser41 lines the GTP pocket. The tract at residues Gly92–Asp96 is G2. The tract at residues Asp113 to Gly116 is G3. Residues Asp113 to His117 and Asn168 to Asp171 each bind GTP. Positions Asn168–Asp171 are G4. Residues Ser206–Leu208 form a G5 region.

It belongs to the TRAFAC class translation factor GTPase superfamily. Classic translation factor GTPase family. CysN/NodQ subfamily. Heterodimer composed of CysD, the smaller subunit, and CysN.

It carries out the reaction sulfate + ATP + H(+) = adenosine 5'-phosphosulfate + diphosphate. The protein operates within sulfur metabolism; hydrogen sulfide biosynthesis; sulfite from sulfate: step 1/3. Its function is as follows. With CysD forms the ATP sulfurylase (ATPS) that catalyzes the adenylation of sulfate producing adenosine 5'-phosphosulfate (APS) and diphosphate, the first enzymatic step in sulfur assimilation pathway. APS synthesis involves the formation of a high-energy phosphoric-sulfuric acid anhydride bond driven by GTP hydrolysis by CysN coupled to ATP hydrolysis by CysD. The sequence is that of Sulfate adenylyltransferase subunit 1 from Escherichia coli O139:H28 (strain E24377A / ETEC).